The primary structure comprises 663 residues: Alcohol oxidase 1 (663 aa).

8–38 contacts FAD; it reads DILVLGGGSSGSCIAGRLANLDHSLKVGLIE. Histidine 567 acts as the Proton acceptor in catalysis. Residues 661–663 carry the Microbody targeting signal motif; the sequence is ARF.

It belongs to the GMC oxidoreductase family. In terms of assembly, homooctamer. FAD serves as cofactor.

It is found in the peroxisome matrix. It catalyses the reaction a primary alcohol + O2 = an aldehyde + H2O2. It functions in the pathway energy metabolism; methane degradation. Major isoform of alcohol oxidase, which catalyzes the oxidation of methanol to formaldehyde and hydrogen peroxide, the first step in the methanol utilization pathway of methylotrophic yeasts. The chain is Alcohol oxidase 1 (AOX1) from Komagataella phaffii (strain ATCC 76273 / CBS 7435 / CECT 11047 / NRRL Y-11430 / Wegner 21-1) (Yeast).